A 195-amino-acid polypeptide reads, in one-letter code: Myosin regulatory light chain, striated muscle, 25 kDa isoform (195 aa).

Residues 1–17 are compositionally biased toward basic and acidic residues; that stretch reads AKDKEKKEKKDKKKDDA. The interval 1-39 is disordered; it reads AKDKEKKEKKDKKKDDAPAEEAPAAAAAPAEEAAPTPSA. Residues 20 to 39 are compositionally biased toward low complexity; sequence EEAPAAAAAPAEEAAPTPSA. 2 EF-hand domains span residues 55–90 and 124–159; these read NQIQEFKEAFTMIDQDRDGIIGPDDLGNIFQQIGRE and DTEGTLRDAFALFDEDKLGYLLEEYVKDLLTNVGDQ. Asp-68, Asp-70, Asp-72, and Asp-79 together coordinate Ca(2+).

In terms of assembly, myosin is a hexamer of 2 heavy chains and 4 light chains.

Its function is as follows. Plays an important role in regulation of muscle cell contractile activity. This is Myosin regulatory light chain, striated muscle, 25 kDa isoform from Lumbricus terrestris (Common earthworm).